The primary structure comprises 225 residues: Non-structural protein V (225 aa).

Residues 145 to 157 (SNEPVSSAGSAQD) show a composition bias toward polar residues. Residues 145–173 (SNEPVSSAGSAQDPNFKRGGANRERARGN) are disordered. Histidine 174, cysteine 193, cysteine 197, cysteine 209, cysteine 211, cysteine 214, cysteine 218, and cysteine 221 together coordinate Zn(2+).

Belongs to the paramyxoviruses V protein family. Interacts with host IFIH1/MDA5 and DHX58/LGP2. Forms with host DDB1, CUL4A, STAT1 and STAT2 the HPIV2 virus V-dependent complex (VDC); this complex targets host STAT2 to proteasomal degradation.

It is found in the host nucleus. Plays an essential role in the inhibition of host immune response. Prevents the establishment of cellular antiviral state by blocking interferon-alpha/beta (IFN-alpha/beta) production and signaling pathway. Interacts with host IFIH1/MDA5 and DHX58/LGP2 to inhibit the transduction pathway involved in the activation of IFN-beta promoter, thus protecting the virus against cell antiviral state. Efficiently blocks type I IFN signaling following infection by targeting host STAT2 for proteasomal degradation. Also plays a role in viral growth by promoting host RhoA-induced F-actin formation. The sequence is that of Non-structural protein V (P/V) from Homo sapiens (Human).